The primary structure comprises 274 residues: Orotidine 5'-phosphate decarboxylase (274 aa).

Lys-95 serves as the catalytic Proton donor.

This sequence belongs to the OMP decarboxylase family. Type 2 subfamily.

It carries out the reaction orotidine 5'-phosphate + H(+) = UMP + CO2. It participates in pyrimidine metabolism; UMP biosynthesis via de novo pathway; UMP from orotate: step 2/2. The sequence is that of Orotidine 5'-phosphate decarboxylase from Variovorax paradoxus (strain S110).